Reading from the N-terminus, the 224-residue chain is UPF0758 protein XF_0148 (224 aa).

The MPN domain occupies 102–224 (SIHDPISAGR…PVSFAEHGWL (123 aa)). 3 residues coordinate Zn(2+): histidine 173, histidine 175, and aspartate 186. Positions 173-186 (HNHPSGNREPSPAD) match the JAMM motif motif.

The protein belongs to the UPF0758 family.

The chain is UPF0758 protein XF_0148 from Xylella fastidiosa (strain 9a5c).